The sequence spans 274 residues: MKHFVNPCIHFIQKQLQERGFKKVVLGLSGGIDSAVVATLATLALGSENVRALLMPSLSSNEEHFNDAFNLAHNLELESKIIQLAPFQENFAKQEGMDLSGKYMEKLDMNQKMRMGNFCARIRMTMLYDCASADNALVLGTSNKSEILLGYGTIFGDLAYAINPIGGLYKTQIFAFARALNVPQEIIAKKPSADLFANQSDETDLGYNYADIDTFLEAFEKLGGVEATQNKEREHIKEKLKNAGFECNMIESLSTRVWNNTFKRTKPTILEYKV.

Gly27–Ser34 contacts ATP. Residue Asp33 participates in Mg(2+) binding. Position 121 (Arg121) interacts with deamido-NAD(+). An ATP-binding site is contributed by Thr141. Glu146 is a binding site for Mg(2+). ATP-binding residues include Lys170 and Ser192.

Belongs to the NAD synthetase family. As to quaternary structure, homodimer.

The catalysed reaction is deamido-NAD(+) + NH4(+) + ATP = AMP + diphosphate + NAD(+) + H(+). It participates in cofactor biosynthesis; NAD(+) biosynthesis; NAD(+) from deamido-NAD(+) (ammonia route): step 1/1. Catalyzes the ATP-dependent amidation of deamido-NAD to form NAD. Uses ammonia as a nitrogen source. The protein is NH(3)-dependent NAD(+) synthetase of Helicobacter hepaticus (strain ATCC 51449 / 3B1).